A 435-amino-acid chain; its full sequence is 3-phosphoshikimate 1-carboxyvinyltransferase (435 aa).

3-phosphoshikimate is bound by residues Lys15, Ser16, and Arg20. Lys15 is a phosphoenolpyruvate binding site. Phosphoenolpyruvate contacts are provided by Gly96 and Arg124. Residues Ser169, Gln171, Ser195, Asp319, and Lys346 each coordinate 3-phosphoshikimate. Gln171 contacts phosphoenolpyruvate. The Proton acceptor role is filled by Asp319. Residues Arg350 and Arg395 each coordinate phosphoenolpyruvate.

This sequence belongs to the EPSP synthase family. In terms of assembly, monomer.

It localises to the cytoplasm. It catalyses the reaction 3-phosphoshikimate + phosphoenolpyruvate = 5-O-(1-carboxyvinyl)-3-phosphoshikimate + phosphate. It participates in metabolic intermediate biosynthesis; chorismate biosynthesis; chorismate from D-erythrose 4-phosphate and phosphoenolpyruvate: step 6/7. Functionally, catalyzes the transfer of the enolpyruvyl moiety of phosphoenolpyruvate (PEP) to the 5-hydroxyl of shikimate-3-phosphate (S3P) to produce enolpyruvyl shikimate-3-phosphate and inorganic phosphate. This is 3-phosphoshikimate 1-carboxyvinyltransferase from Chlorobium phaeobacteroides (strain BS1).